The primary structure comprises 790 residues: Tumor necrosis factor alpha-induced protein 3 (790 aa).

At Ala-2 the chain carries N-acetylalanine. Positions 58 to 300 (PQFREIIHKA…LTDPENEMKE (243 aa)) are TRAF-binding. One can recognise an OTU domain in the interval 92–263 (LVALKTNGDG…SHHFVPLVTL (172 aa)). Residue Asp-100 is part of the active site. Cys-103 (nucleophile) is an active-site residue. Interaction with ubiquitin regions lie at residues 157 to 159 (LCY), 190 to 192 (SLE), and 224 to 227 (FAPL). Residue His-256 is the Proton acceptor of the active site. The interval 369–775 (AQNPMESSLP…ACDHFGNAKC (407 aa)) is interaction with TNIP1. The A20-type 1 zinc finger occupies 381–416 (SLMDVKCETPNCPFFMSVNTQPLCHECSERRQKNQN). Positions 386–453 (KCETPNCPFF…EPLAWNPEEP (68 aa)) are interaction with RIPK1. Residues Cys-387, Cys-392, Cys-404, and Cys-407 each coordinate Zn(2+). The segment at 415–467 (QNKLPKLNSKPGPEGLPGMALGASRGEAYEPLAWNPEEPTGGPHSAPPTAPSP) is disordered. Ser-459 is subject to Phosphoserine. 2 consecutive A20-type zinc fingers follow at residues 472–507 (ETTA…LHAS) and 515–548 (HLDP…AEAS). Zn(2+)-binding residues include Cys-478, Cys-483, Cys-495, Cys-498, Cys-521, Cys-524, Cys-536, and Cys-539. The disordered stretch occupies residues 550 to 580 (SLSTSLPPSCHQRSKSDPSQLVRSPSPHSCH). The span at 566-576 (DPSQLVRSPSP) shows a compositional bias: polar residues. Residue Ser-575 is modified to Phosphoserine. The segment at 601–636 (RTGTSKCRKAGCMYFGTPENKGFCTLCFIEYRENKH) adopts an A20-type 4 zinc-finger fold. Residues 605–655 (SKCRKAGCMYFGTPENKGFCTLCFIEYRENKHLVAASGKASPTASRFQNTI) are required for proteasomal degradation of UBE2N and UBE2D3, TRAF6 deubiquitination, and TAX1BP1 interaction with UBE2N. Residues 606-790 (KCRKAGCMYF…ECFQFKQMYG (185 aa)) are sufficient for inhibitory activity of TNF-induced NF-kappa-B activity. Residues Cys-607, Cys-612, Cys-624, and Cys-627 each contribute to the Zn(2+) site. Ser-645 carries the post-translational modification Phosphoserine. Residues 651 to 686 (FQNTIPCLGRECGTLGSTMFEGYCQKCFIEAQNQRF) form an A20-type 5 zinc finger. Residues Cys-657, Cys-662, Cys-674, and Cys-677 each coordinate Zn(2+). The span at 689–705 (AKRTEEQLRSSQRRDVP) shows a compositional bias: basic and acidic residues. A disordered region spans residues 689–712 (AKRTEEQLRSSQRRDVPRTTQSTS). Residues 697-790 (RSSQRRDVPR…ECFQFKQMYG (94 aa)) are required for lysosomal localization and for TRAF2 lysosomal degradation. 2 A20-type zinc fingers span residues 710-745 (STSR…RMGP) and 756-790 (DPPK…QMYG). Residues Cys-716, Cys-721, Cys-733, Cys-736, Cys-762, Cys-767, Cys-779, and Cys-782 each contribute to the Zn(2+) site.

It belongs to the peptidase C64 family. Homodimer. Interacts with TNIP1, TAX1BP1 and TRAF2. Interacts with RNF11, ITCH and TAX1BP1 only after TNF stimulation; these interaction are transient and they are lost after 1 hour of stimulation with TNF. Interacts with YWHAZ and YWHAH. Interacts with IKBKG; the interaction is induced by TNF stimulation and by polyubiquitin. Interacts with RIPK1. Interacts with UBE2N; the interaction requires TAX1BP1. Interacts with TRAF6. Post-translationally, proteolytically cleaved by MALT1 upon TCR stimulation; disrupts NF-kappa-B inhibitory function and results in increased IL-2 production. It is proposed that only a fraction of TNFAIP3 colocalized with TCR and CBM complex is cleaved, leaving the main TNFAIP3 pool intact.

Its subcellular location is the cytoplasm. The protein localises to the nucleus. It localises to the lysosome. It catalyses the reaction Thiol-dependent hydrolysis of ester, thioester, amide, peptide and isopeptide bonds formed by the C-terminal Gly of ubiquitin (a 76-residue protein attached to proteins as an intracellular targeting signal).. In terms of biological role, ubiquitin-editing enzyme that contains both ubiquitin ligase and deubiquitinase activities. Involved in immune and inflammatory responses signaled by cytokines, such as TNF-alpha and IL-1 beta, or pathogens via Toll-like receptors (TLRs) through terminating NF-kappa-B activity. Essential component of a ubiquitin-editing protein complex, comprising also RNF11, ITCH and TAX1BP1, that ensures the transient nature of inflammatory signaling pathways. In cooperation with TAX1BP1 promotes disassembly of E2-E3 ubiquitin protein ligase complexes in IL-1R and TNFR-1 pathways; affected are at least E3 ligases TRAF6, TRAF2 and BIRC2, and E2 ubiquitin-conjugating enzymes UBE2N and UBE2D3. In cooperation with TAX1BP1 promotes ubiquitination of UBE2N and proteasomal degradation of UBE2N and UBE2D3. Upon TNF stimulation, deubiquitinates 'Lys-63'-polyubiquitin chains on RIPK1 and catalyzes the formation of 'Lys-48'-polyubiquitin chains. This leads to RIPK1 proteasomal degradation and consequently termination of the TNF- or LPS-mediated activation of NF-kappa-B. Deubiquitinates TRAF6 probably acting on 'Lys-63'-linked polyubiquitin. Upon T-cell receptor (TCR)-mediated T-cell activation, deubiquitinates 'Lys-63'-polyubiquitin chains on MALT1 thereby mediating disassociation of the CBM (CARD11:BCL10:MALT1) and IKK complexes and preventing sustained IKK activation. Deubiquitinates NEMO/IKBKG; the function is facilitated by TNIP1 and leads to inhibition of NF-kappa-B activation. Upon stimulation by bacterial peptidoglycans, probably deubiquitinates RIPK2. Can also inhibit I-kappa-B-kinase (IKK) through a non-catalytic mechanism which involves polyubiquitin; polyubiquitin promotes association with IKBKG and prevents IKK MAP3K7-mediated phosphorylation. Targets TRAF2 for lysosomal degradation. In vitro able to deubiquitinate 'Lys-11'-, 'Lys-48'- and 'Lys-63' polyubiquitin chains. Inhibitor of programmed cell death. Has a role in the function of the lymphoid system. Required for LPS-induced production of pro-inflammatory cytokines and IFN beta in LPS-tolerized macrophages. The sequence is that of Tumor necrosis factor alpha-induced protein 3 (TNFAIP3) from Macaca fascicularis (Crab-eating macaque).